The primary structure comprises 259 residues: Protein FAM220A (259 aa).

Disordered stretches follow at residues 1-44 (MRDR…ADAP) and 131-154 (LGGG…RVSR). Residues 138–152 (TDGHRGQCPKGEPRV) show a composition bias toward basic and acidic residues.

In terms of assembly, interacts with transcriptional activator STAT3; the interaction occurs in both the nucleus and the cytoplasm, is enhanced by IL6 and promotes STAT3 dephosphorylation, leading to negative regulation of STAT3 transcriptional activator activity. Can interact with both unphosphorylated and phosphorylated STAT3 but interacts preferentially with phosphorylated STAT3 in the nucleus. Interacts with protein phosphatase PTPN2/TC45; this promotes interaction of PTPN2 with STAT3, leading to dephosphorylation of STAT3 by PTPN2.

The protein localises to the nucleus. It is found in the cytoplasm. Its subcellular location is the cytoplasmic vesicle. It localises to the secretory vesicle. The protein resides in the acrosome. In terms of biological role, promotes dephosphorylation of transcriptional activator STAT3 by interacting with both STAT3 and protein phosphatase PTPN2. This promotes interaction of PTPN2 with STAT3 and mediates STAT3 dephosphorylation by PTPN2, leading to negative regulation of STAT3 transcriptional activator activity. May be required for spermiogenesis or sperm function. The chain is Protein FAM220A from Homo sapiens (Human).